The primary structure comprises 353 residues: Photosystem II protein D1 (353 aa).

Threonine 2 is subject to N-acetylthreonine. Residue threonine 2 is modified to Phosphothreonine. The next 3 helical transmembrane spans lie at 29–46 (YIGW…TATS), 118–133 (HFLL…EWEL), and 142–156 (WIAV…AATA). Position 118 (histidine 118) interacts with chlorophyll a. Pheophytin a is bound at residue tyrosine 126. [CaMn4O5] cluster contacts are provided by aspartate 170 and glutamate 189. The helical transmembrane segment at 197-218 (FHMLGVAGVFGGSLFSAMHGSL) threads the bilayer. Histidine 198 lines the chlorophyll a pocket. A quinone is bound by residues histidine 215 and 264-265 (SF). A Fe cation-binding site is contributed by histidine 215. Histidine 272 contributes to the Fe cation binding site. Residues 274–288 (FLAAWPVVGIWFTAL) traverse the membrane as a helical segment. [CaMn4O5] cluster contacts are provided by histidine 332, glutamate 333, aspartate 342, and alanine 344. Positions 345–353 (AVEAPSTIG) are excised as a propeptide.

The protein belongs to the reaction center PufL/M/PsbA/D family. As to quaternary structure, PSII is composed of 1 copy each of membrane proteins PsbA, PsbB, PsbC, PsbD, PsbE, PsbF, PsbH, PsbI, PsbJ, PsbK, PsbL, PsbM, PsbT, PsbX, PsbY, PsbZ, Psb30/Ycf12, at least 3 peripheral proteins of the oxygen-evolving complex and a large number of cofactors. It forms dimeric complexes. Requires The D1/D2 heterodimer binds P680, chlorophylls that are the primary electron donor of PSII, and subsequent electron acceptors. It shares a non-heme iron and each subunit binds pheophytin, quinone, additional chlorophylls, carotenoids and lipids. D1 provides most of the ligands for the Mn4-Ca-O5 cluster of the oxygen-evolving complex (OEC). There is also a Cl(-1) ion associated with D1 and D2, which is required for oxygen evolution. The PSII complex binds additional chlorophylls, carotenoids and specific lipids. as cofactor. Tyr-161 forms a radical intermediate that is referred to as redox-active TyrZ, YZ or Y-Z. Post-translationally, C-terminally processed by CTPA; processing is essential to allow assembly of the oxygen-evolving complex and thus photosynthetic growth.

Its subcellular location is the plastid. It localises to the chloroplast thylakoid membrane. It carries out the reaction 2 a plastoquinone + 4 hnu + 2 H2O = 2 a plastoquinol + O2. Photosystem II (PSII) is a light-driven water:plastoquinone oxidoreductase that uses light energy to abstract electrons from H(2)O, generating O(2) and a proton gradient subsequently used for ATP formation. It consists of a core antenna complex that captures photons, and an electron transfer chain that converts photonic excitation into a charge separation. The D1/D2 (PsbA/PsbD) reaction center heterodimer binds P680, the primary electron donor of PSII as well as several subsequent electron acceptors. This is Photosystem II protein D1 from Lemna minor (Common duckweed).